We begin with the raw amino-acid sequence, 333 residues long: MSDNPTIAPKIVVVGAGAFGTALAAVAAASANANVTLLSRREEVAEECRRTGRNERALPGIALPAGLGFSSEAAALAGADIVLFAMPSQEHRAAAQQYGTAIGADATIVTCAKGMEQSTGRLLTELLAEELPGHRIGVLSGPGFAADIAKGLPTAMVVAAPDMAVATELAEALSGPTFRLYPSTDRIGVQLGGALKNVLAIACGIVEGAGLGDSARAALISRGLAEMSRFIAARGGEADTVRGLSGLGDLVLTATSHQSRNLRFGIALGKNGRADGRGAELVEGAFAASVAARVAGDLGIEMPITEAVAAIIDGKLDVRTALEQLMSRPITQE.

NADPH is bound by residues Phe-19, Arg-40, Arg-41, and Lys-113. The sn-glycerol 3-phosphate site is built by Lys-113 and Gly-141. Ala-145 is an NADPH binding site. Sn-glycerol 3-phosphate contacts are provided by Lys-196, Asp-249, Ser-259, Arg-260, and Asn-261. Lys-196 acts as the Proton acceptor in catalysis. An NADPH-binding site is contributed by Arg-260. Positions 282 and 283 each coordinate NADPH.

This sequence belongs to the NAD-dependent glycerol-3-phosphate dehydrogenase family.

It localises to the cytoplasm. The catalysed reaction is sn-glycerol 3-phosphate + NAD(+) = dihydroxyacetone phosphate + NADH + H(+). The enzyme catalyses sn-glycerol 3-phosphate + NADP(+) = dihydroxyacetone phosphate + NADPH + H(+). It functions in the pathway membrane lipid metabolism; glycerophospholipid metabolism. Functionally, catalyzes the reduction of the glycolytic intermediate dihydroxyacetone phosphate (DHAP) to sn-glycerol 3-phosphate (G3P), the key precursor for phospholipid synthesis. The sequence is that of Glycerol-3-phosphate dehydrogenase [NAD(P)+] from Sinorhizobium fredii (strain NBRC 101917 / NGR234).